Reading from the N-terminus, the 144-residue chain is MNPSRCRILAVGKVRRSWIQDGIELYRKRLPGLEIIEIRDSTPDKEADSIRASLRPNEHVIALMEEGDAVGSIPFARRLDQLGNQRLAFVIGGADGLTNELKGRAHWQLSLSPMTFPHELARLMLIEQLFRAQAILQGSPYHRA.

S-adenosyl-L-methionine is bound by residues leucine 63, glycine 92, and 111 to 116; that span reads LSPMTF.

Belongs to the RNA methyltransferase RlmH family. As to quaternary structure, homodimer.

The protein resides in the cytoplasm. It carries out the reaction pseudouridine(1915) in 23S rRNA + S-adenosyl-L-methionine = N(3)-methylpseudouridine(1915) in 23S rRNA + S-adenosyl-L-homocysteine + H(+). Its function is as follows. Specifically methylates the pseudouridine at position 1915 (m3Psi1915) in 23S rRNA. The sequence is that of Ribosomal RNA large subunit methyltransferase H from Parasynechococcus marenigrum (strain WH8102).